Reading from the N-terminus, the 297-residue chain is Phosphatidylinositol N-acetylglucosaminyltransferase subunit C (297 aa).

4 consecutive transmembrane segments (helical) span residues 67–87, 88–108, 153–173, and 239–259; these read VFVV…WLFG, TGLA…GGDG, SVFM…AAIV, and AFGG…LLLF.

This sequence belongs to the PIGC family. In terms of assembly, component of the glycosylphosphatidylinositol-N-acetylglucosaminyltransferase (GPI-GnT) complex composed at least by PIGA, PIGC, PIGH, PIGP, PIGQ, PIGY and DPM2. Interacts with PIGQ. Interacts with the heterodimer PIGA:PIGH.

It localises to the endoplasmic reticulum membrane. It functions in the pathway glycolipid biosynthesis; glycosylphosphatidylinositol-anchor biosynthesis. Functionally, part of the glycosylphosphatidylinositol-N-acetylglucosaminyltransferase (GPI-GnT) complex that catalyzes the transfer of N-acetylglucosamine from UDP-N-acetylglucosamine to phosphatidylinositol and participates in the first step of GPI biosynthesis. This is Phosphatidylinositol N-acetylglucosaminyltransferase subunit C from Rattus norvegicus (Rat).